The primary structure comprises 450 residues: MSNQGAIRRSGEDRISSLPDHLLSQILSNLPTENAVTTSILSTRWKDLWLSTPVLDIDIDAFDDATTFISFATRFLDSFKDSCLHKLQISFQMEAVDMWTIIPWIEDAVKRRIQHLEVDSRIDHMIDTLPLTVYLSESLVSLRLHLVMLHRFVFVSLPNLKVMHLEENIYSYAETMEKFISSCPVLEDLTVVRNVDEATEKVLRVSSQSLNSLKLVIDSSKCWYNDDSDDWKVVIDAPQLVYLSLKDDQSVSFVINNLCSSAKADIKVSFNVSDIWDLEESFERSNVGKFLTGLSSLRDMTISGTTLKIICHYLKHEPMPQFRNMTRLHAKFYVCDLEMLPCVLESCPNLKSLVLKLKGEMENEEISLSSSVPKCLQSSLENVEIIRPNYGSGEEMKLSKYFLENSLVLKKFKLCRDCHSEEQESLVVRELMTFQRCSSACEINVVRFQR.

Positions 12–58 (EDRISSLPDHLLSQILSNLPTENAVTTSILSTRWKDLWLSTPVLDID) constitute an F-box domain. LRR repeat units lie at residues 157–181 (LPNL…KFIS) and 294–317 (LSSL…LKHE). An FBD domain is found at 364 to 416 (EEISLSSSVPKCLQSSLENVEIIRPNYGSGEEMKLSKYFLENSLVLKKFKLCR).

The protein is F-box/FBD/LRR-repeat protein At5g22660 of Arabidopsis thaliana (Mouse-ear cress).